We begin with the raw amino-acid sequence, 458 residues long: UDP-N-acetylglucosamine 1-carboxyvinyltransferase (458 aa).

34-35 contributes to the phosphoenolpyruvate binding site; it reads KN. Arginine 104 contacts UDP-N-acetyl-alpha-D-glucosamine. The Proton donor role is filled by cysteine 128. At cysteine 128 the chain carries 2-(S-cysteinyl)pyruvic acid O-phosphothioketal. UDP-N-acetyl-alpha-D-glucosamine-binding residues include aspartate 320 and valine 342.

It belongs to the EPSP synthase family. MurA subfamily.

The protein resides in the cytoplasm. It catalyses the reaction phosphoenolpyruvate + UDP-N-acetyl-alpha-D-glucosamine = UDP-N-acetyl-3-O-(1-carboxyvinyl)-alpha-D-glucosamine + phosphate. It participates in cell wall biogenesis; peptidoglycan biosynthesis. Functionally, cell wall formation. Adds enolpyruvyl to UDP-N-acetylglucosamine. The chain is UDP-N-acetylglucosamine 1-carboxyvinyltransferase from Prochlorococcus marinus (strain NATL1A).